The following is a 103-amino-acid chain: Large ribosomal subunit protein bL21 (103 aa).

This sequence belongs to the bacterial ribosomal protein bL21 family. Part of the 50S ribosomal subunit. Contacts protein L20.

In terms of biological role, this protein binds to 23S rRNA in the presence of protein L20. The protein is Large ribosomal subunit protein bL21 of Shewanella sediminis (strain HAW-EB3).